The sequence spans 140 residues: Nucleoside diphosphate kinase (140 aa).

Residues lysine 11, phenylalanine 59, arginine 87, threonine 93, arginine 104, and asparagine 114 each coordinate ATP. The Pros-phosphohistidine intermediate role is filled by histidine 117.

The protein belongs to the NDK family. Homotetramer. Requires Mg(2+) as cofactor.

Its subcellular location is the cytoplasm. It carries out the reaction a 2'-deoxyribonucleoside 5'-diphosphate + ATP = a 2'-deoxyribonucleoside 5'-triphosphate + ADP. The enzyme catalyses a ribonucleoside 5'-diphosphate + ATP = a ribonucleoside 5'-triphosphate + ADP. Major role in the synthesis of nucleoside triphosphates other than ATP. The ATP gamma phosphate is transferred to the NDP beta phosphate via a ping-pong mechanism, using a phosphorylated active-site intermediate. This chain is Nucleoside diphosphate kinase, found in Bartonella tribocorum (strain CIP 105476 / IBS 506).